We begin with the raw amino-acid sequence, 245 residues long: E3 ubiquitin-protein ligase RNF138 (245 aa).

Residue alanine 2 is modified to N-acetylalanine. The segment at 18–58 adopts an RING-type zinc-finger fold; sequence CPVCQEVLKTPVRTTACQHVFCRKCFLTAMRESGAHCPLCR. Zn(2+) is bound by residues cysteine 86, cysteine 89, histidine 101, and cysteine 105. The C2HC RNF-type zinc-finger motif lies at 86-105; the sequence is CRCCAKQIKFYRMRHHYKSC. A disordered region spans residues 125–154; that stretch reads QDSVGNSNRSETSTSDNTETYQENTSSSGH. A Phosphothreonine modification is found at threonine 142. C2H2-type zinc fingers lie at residues 157-180 and 187-215; these read FKCP…NSNH and VTCP…NQRH. A UIM domain is found at 225–243; the sequence is LQLDEETQYQTAVEESFQV.

As to quaternary structure, interacts with NLK. Interacts with XRCC5/Ku80. Interacts with RBBP8/CtIP. Auto-ubiquitinated.

Its subcellular location is the chromosome. It catalyses the reaction S-ubiquitinyl-[E2 ubiquitin-conjugating enzyme]-L-cysteine + [acceptor protein]-L-lysine = [E2 ubiquitin-conjugating enzyme]-L-cysteine + N(6)-ubiquitinyl-[acceptor protein]-L-lysine.. Its pathway is protein modification; protein ubiquitination. Functionally, E3 ubiquitin-protein ligase involved in DNA damage response by promoting DNA resection and homologous recombination. Recruited to sites of double-strand breaks following DNA damage and specifically promotes double-strand break repair via homologous recombination. Two different, non-exclusive, mechanisms have been proposed. According to a report, regulates the choice of double-strand break repair by favoring homologous recombination over non-homologous end joining (NHEJ): acts by mediating ubiquitination of XRCC5/Ku80, leading to remove the Ku complex from DNA breaks, thereby promoting homologous recombination. According to another report, cooperates with UBE2Ds E2 ubiquitin ligases (UBE2D1, UBE2D2, UBE2D3 or UBE2D4) to promote homologous recombination by mediating ubiquitination of RBBP8/CtIP. Together with NLK, involved in the ubiquitination and degradation of TCF/LEF. Also exhibits auto-ubiquitination activity in combination with UBE2K. May act as a negative regulator in the Wnt/beta-catenin-mediated signaling pathway. The sequence is that of E3 ubiquitin-protein ligase RNF138 from Homo sapiens (Human).